The chain runs to 142 residues: Protein-export protein SecB (142 aa).

Belongs to the SecB family. Homotetramer, a dimer of dimers. One homotetramer interacts with 1 SecA dimer.

The protein resides in the cytoplasm. One of the proteins required for the normal export of preproteins out of the cell cytoplasm. It is a molecular chaperone that binds to a subset of precursor proteins, maintaining them in a translocation-competent state. It also specifically binds to its receptor SecA. This is Protein-export protein SecB from Buchnera aphidicola subsp. Acyrthosiphon pisum (strain 5A).